The chain runs to 573 residues: DNA ligase (573 aa).

ATP is bound at residue glutamate 250. Catalysis depends on lysine 252, which acts as the N6-AMP-lysine intermediate. Positions 257, 272, 301, 342, 432, and 438 each coordinate ATP.

It belongs to the ATP-dependent DNA ligase family. Requires Mg(2+) as cofactor.

It carries out the reaction ATP + (deoxyribonucleotide)n-3'-hydroxyl + 5'-phospho-(deoxyribonucleotide)m = (deoxyribonucleotide)n+m + AMP + diphosphate.. DNA ligase that seals nicks in double-stranded DNA during DNA replication, DNA recombination and DNA repair. The chain is DNA ligase from Methanococcus vannielii (strain ATCC 35089 / DSM 1224 / JCM 13029 / OCM 148 / SB).